Reading from the N-terminus, the 254-residue chain is Syntaxin-6 (254 aa).

Topologically, residues 1–233 are cytoplasmic; it reads MSMEDPFFVV…VSHMTSDRRQ (233 aa). Residues 46–72 adopt a coiled-coil conformation; sequence TTNELRNNLRSIEWDLEDLDETISIVE. The disordered stretch occupies residues 103–138; that stretch reads KDQMSNSSMQALAERKNRQALLGESSSQSWSSGPDK. The 63-residue stretch at 162 to 224 folds into the t-SNARE coiled-coil homology domain; it reads QLIVEQQDEQ…DNVMKKLAKV (63 aa). A helical; Anchor for type IV membrane protein transmembrane segment spans residues 234 to 254; the sequence is WCAIIVLFVILLVVLVLFLVL.

The protein belongs to the syntaxin family.

The protein resides in the golgi apparatus membrane. The protein localises to the golgi apparatus. Its subcellular location is the trans-Golgi network membrane. It is found in the recycling endosome membrane. In terms of biological role, SNARE promoting movement of transport vesicles to target membranes. Targets endosomes to the trans-Golgi network, and may therefore function in retrograde trafficking. Together with SNARE STX12, promotes movement of vesicles from endosomes to the cell membrane, and may therefore function in the endocytic recycling pathway. The sequence is that of Syntaxin-6 (STX6) from Gallus gallus (Chicken).